The sequence spans 353 residues: Protein MGF 360-11L (353 aa).

One copy of the ANK repeat lies at 59-88 (ELNTVLMKAAKENNHDLIRLFVEWGADINY).

The protein belongs to the asfivirus MGF 360 family. In terms of assembly, interacts with host TBK1 ad IRF7.

Plays a role in virus cell tropism, and may be required for efficient virus replication in macrophages. In addition, inhibits the phosphorylation of host TBK1 and IRF7 and thereby negatively regulates the host cGAS signaling pathway and antagonizes IFN-mediated antiviral activity. The chain is Protein MGF 360-11L from African swine fever virus (isolate Pig/Kenya/KEN-50/1950) (ASFV).